Reading from the N-terminus, the 121-residue chain is Cell division protein FtsB (121 aa).

Topologically, residues 1–6 are cytoplasmic; it reads MRNWRW. A helical transmembrane segment spans residues 7-24; that stretch reads LLLVLAVLLAWLQYRFWF. Residues 25-121 lie on the Periplasmic side of the membrane; the sequence is GPGNSGEVMM…PASTDPVDHP (97 aa). Residues 31–66 adopt a coiled-coil conformation; it reads EVMMLEAQVAHQTQDNEGLRQRNQALAAEVKDLKDG. A disordered region spans residues 94 to 121; the sequence is APLPAPASPETAAPAQQAPASTDPVDHP. The span at 101 to 121 shows a compositional bias: low complexity; sequence SPETAAPAQQAPASTDPVDHP.

This sequence belongs to the FtsB family. In terms of assembly, part of a complex composed of FtsB, FtsL and FtsQ.

The protein resides in the cell inner membrane. Essential cell division protein. May link together the upstream cell division proteins, which are predominantly cytoplasmic, with the downstream cell division proteins, which are predominantly periplasmic. The protein is Cell division protein FtsB of Xanthomonas oryzae pv. oryzae (strain MAFF 311018).